Consider the following 511-residue polypeptide: Spermatogenesis-associated protein 2 (511 aa).

A PUB domain is found at 77-149 (ALHCAFSMLE…AYKLKELVES (73 aa)). The PIM motif motif lies at 320–337 (TYFPTQDDVDLYTDSEPR).

The protein belongs to the SPATA2 family. As to quaternary structure, interacts (via the PIM motif) with RNF31/HOIP (via the PUB domain); the interaction is direct. Interacts (via the PUB domain) with CYLD; the interaction is direct. In terms of tissue distribution, expressed in the testis and to a lesser extent in the brain, while skeletal muscle and kidney show weak expression.

The protein localises to the cytoplasm. Its subcellular location is the nucleus. Its function is as follows. Bridging factor that mediates the recruitment of CYLD to the LUBAC complex, thereby regulating TNF-alpha-induced necroptosis. Acts as a direct binding intermediate that bridges RNF31/HOIP, the catalytic subunit of the LUBAC complex, and the deubiquitinase (CYLD), thereby recruiting CYLD to the TNF-R1 signaling complex (TNF-RSC). Required to activate the 'Met-1'- (linear) and 'Lys-63'-linked deubiquitinase activities of CYLD. Controls the kinase activity of RIPK1 and TNF-alpha-induced necroptosis by promoting 'Met-1'-linked deubiquitination of RIPK1 by CYLD. This is Spermatogenesis-associated protein 2 from Rattus norvegicus (Rat).